We begin with the raw amino-acid sequence, 236 residues long: ATP synthase subunit a (236 aa).

The next 5 membrane-spanning stretches (helical) occupy residues 17-37, 75-95, 112-132, 174-194, and 208-228; these read LSDM…AVAA, FLTL…LGLP, DATV…YYGV, IYAG…YGVL, and FSIF…MVYM.

This sequence belongs to the ATPase A chain family. As to quaternary structure, F-type ATPases have 2 components, CF(1) - the catalytic core - and CF(0) - the membrane proton channel. CF(1) has five subunits: alpha(3), beta(3), gamma(1), delta(1), epsilon(1). CF(0) has three main subunits: a(1), b(2) and c(9-12). The alpha and beta chains form an alternating ring which encloses part of the gamma chain. CF(1) is attached to CF(0) by a central stalk formed by the gamma and epsilon chains, while a peripheral stalk is formed by the delta and b chains.

It is found in the cell membrane. Key component of the proton channel; it plays a direct role in the translocation of protons across the membrane. This Geobacillus stearothermophilus (Bacillus stearothermophilus) protein is ATP synthase subunit a.